A 611-amino-acid chain; its full sequence is Aspartate--tRNA ligase, mitochondrial (611 aa).

The N-terminal 30 residues, Met1–Gln30, are a transit peptide targeting the mitochondrion. An L-aspartate-binding site is contributed by Glu192. Positions Gln216–Lys219 are aspartate. Residue Arg238 participates in L-aspartate binding. Residues Arg238–Glu240 and Glu502 each bind ATP. Arg509 contributes to the L-aspartate binding site. Gly554–Arg557 provides a ligand contact to ATP.

It belongs to the class-II aminoacyl-tRNA synthetase family. Type 1 subfamily.

The protein localises to the mitochondrion. The enzyme catalyses tRNA(Asp) + L-aspartate + ATP = L-aspartyl-tRNA(Asp) + AMP + diphosphate. In Schizosaccharomyces pombe (strain 972 / ATCC 24843) (Fission yeast), this protein is Aspartate--tRNA ligase, mitochondrial (msd1).